Reading from the N-terminus, the 489-residue chain is Ketol-acid reductoisomerase (NADP(+)) (489 aa).

Positions 16–207 (IKKCRFMEKK…GGHRAGVLES (192 aa)) constitute a KARI N-terminal Rossmann domain. NADP(+) is bound by residues 44 to 47 (CGSQ), arginine 67, serine 77, and 107 to 109 (DKQ). The active site involves histidine 131. NADP(+) is bound at residue glycine 157. 2 KARI C-terminal knotted domains span residues 208–343 (SFVA…QSPD) and 344–483 (YDKK…MKNM). Residues aspartate 216, glutamate 220, glutamate 388, and glutamate 392 each contribute to the Mg(2+) site. Serine 413 is a substrate binding site.

Belongs to the ketol-acid reductoisomerase family. Requires Mg(2+) as cofactor.

The catalysed reaction is (2R)-2,3-dihydroxy-3-methylbutanoate + NADP(+) = (2S)-2-acetolactate + NADPH + H(+). It carries out the reaction (2R,3R)-2,3-dihydroxy-3-methylpentanoate + NADP(+) = (S)-2-ethyl-2-hydroxy-3-oxobutanoate + NADPH + H(+). It participates in amino-acid biosynthesis; L-isoleucine biosynthesis; L-isoleucine from 2-oxobutanoate: step 2/4. Its pathway is amino-acid biosynthesis; L-valine biosynthesis; L-valine from pyruvate: step 2/4. Involved in the biosynthesis of branched-chain amino acids (BCAA). Catalyzes an alkyl-migration followed by a ketol-acid reduction of (S)-2-acetolactate (S2AL) to yield (R)-2,3-dihydroxy-isovalerate. In the isomerase reaction, S2AL is rearranged via a Mg-dependent methyl migration to produce 3-hydroxy-3-methyl-2-ketobutyrate (HMKB). In the reductase reaction, this 2-ketoacid undergoes a metal-dependent reduction by NADPH to yield (R)-2,3-dihydroxy-isovalerate. This chain is Ketol-acid reductoisomerase (NADP(+)), found in Buchnera aphidicola subsp. Diuraphis noxia.